A 197-amino-acid polypeptide reads, in one-letter code: Adenylyl-sulfate kinase (197 aa).

33-40 (GLSGSGKS) serves as a coordination point for ATP. S107 serves as the catalytic Phosphoserine intermediate.

Belongs to the APS kinase family.

The enzyme catalyses adenosine 5'-phosphosulfate + ATP = 3'-phosphoadenylyl sulfate + ADP + H(+). The protein operates within sulfur metabolism; hydrogen sulfide biosynthesis; sulfite from sulfate: step 2/3. Its function is as follows. Catalyzes the synthesis of activated sulfate. The chain is Adenylyl-sulfate kinase from Bacillus licheniformis (strain ATCC 14580 / DSM 13 / JCM 2505 / CCUG 7422 / NBRC 12200 / NCIMB 9375 / NCTC 10341 / NRRL NRS-1264 / Gibson 46).